A 422-amino-acid polypeptide reads, in one-letter code: Synaptotagmin-15 (422 aa).

Residues 1–4 (MAEQ) lie on the Extracellular side of the membrane. Residues 5-27 (LALVIGCIIGGLLLLIGISCCLW) traverse the membrane as a helical; Signal-anchor for type III membrane protein segment. Topologically, residues 28–422 (KRLCTTFTYE…WHALCRPMEP (395 aa)) are cytoplasmic. 2 consecutive C2 domains span residues 148–267 (CLGR…VIWR) and 279–400 (EFGD…EHWN).

This sequence belongs to the synaptotagmin family. Homodimer.

It is found in the membrane. May be involved in the trafficking and exocytosis of secretory vesicles in non-neuronal tissues. This chain is Synaptotagmin-15 (Syt15), found in Rattus norvegicus (Rat).